We begin with the raw amino-acid sequence, 520 residues long: Bifunctional purine biosynthesis protein PurH (520 aa).

The 147-residue stretch at 1–147 (MAKIGRALIS…KNNRDVTVVV (147 aa)) folds into the MGS-like domain.

It belongs to the PurH family.

It carries out the reaction (6R)-10-formyltetrahydrofolate + 5-amino-1-(5-phospho-beta-D-ribosyl)imidazole-4-carboxamide = 5-formamido-1-(5-phospho-D-ribosyl)imidazole-4-carboxamide + (6S)-5,6,7,8-tetrahydrofolate. It catalyses the reaction IMP + H2O = 5-formamido-1-(5-phospho-D-ribosyl)imidazole-4-carboxamide. Its pathway is purine metabolism; IMP biosynthesis via de novo pathway; 5-formamido-1-(5-phospho-D-ribosyl)imidazole-4-carboxamide from 5-amino-1-(5-phospho-D-ribosyl)imidazole-4-carboxamide (10-formyl THF route): step 1/1. It participates in purine metabolism; IMP biosynthesis via de novo pathway; IMP from 5-formamido-1-(5-phospho-D-ribosyl)imidazole-4-carboxamide: step 1/1. The polypeptide is Bifunctional purine biosynthesis protein PurH (Geobacter sp. (strain M21)).